A 376-amino-acid chain; its full sequence is Cyclin-dependent kinase 9-A (376 aa).

The region spanning 19–319 is the Protein kinase domain; it reads YERLAKIGQG…SDDALNNDFF (301 aa). ATP-binding positions include 25–33 and lysine 48; that span reads IGQGTFGEV. The active-site Proton acceptor is the aspartate 153. Residues 345-376 form a disordered region; sequence PPRRRGGHMPQQPANQARNPAATNQSEFERVF. The segment covering 354–369 has biased composition (low complexity); it reads PQQPANQARNPAATNQ.

It belongs to the protein kinase superfamily. CMGC Ser/Thr protein kinase family. CDC2/CDKX subfamily. As to quaternary structure, associates with cyclin-T to form P-TEFb.

Its subcellular location is the nucleus. It carries out the reaction L-seryl-[protein] + ATP = O-phospho-L-seryl-[protein] + ADP + H(+). It catalyses the reaction L-threonyl-[protein] + ATP = O-phospho-L-threonyl-[protein] + ADP + H(+). The catalysed reaction is [DNA-directed RNA polymerase] + ATP = phospho-[DNA-directed RNA polymerase] + ADP + H(+). Functionally, member of the cyclin-dependent kinase pair (CDK9/cyclin-T) complex, also called positive transcription elongation factor B (P-TEFb), which is proposed to facilitate the transition from abortive to production elongation by phosphorylating the CTD (C-terminal domain) of the large subunit of RNA polymerase II (RNAP II) and SUPT5H. This chain is Cyclin-dependent kinase 9-A (cdk9-a), found in Xenopus laevis (African clawed frog).